Reading from the N-terminus, the 388-residue chain is 3-amino-5-hydroxybenzoate synthase (388 aa).

Lys188 bears the N6-(pyridoxal phosphate)lysine mark.

The protein belongs to the degT/dnrJ/eryC1 family. In terms of assembly, homodimer. Can interact with RifL. It depends on pyridoxal 5'-phosphate as a cofactor.

The catalysed reaction is 5-deoxy-5-amino-3-dehydroshikimate = 3-amino-5-hydroxybenzoate + H2O + H(+). The enzyme catalyses UDP-3-oxo-alpha-D-glucose + L-glutamine = UDP-alpha-D-kanosamine + 2-oxoglutaramate. It participates in antibiotic biosynthesis; rifamycin B biosynthesis. With respect to regulation, AHBA synthase activity is activated by 3-deoxy-D-arabinoheptulosonic acid 7-phosphate (DAHP), an intermediate in the shikimate pathway, and is irreversibly inhibited by gabaculine (5-amino-1,3-cyclohexadiene-1-carboxylate). Functionally, catalyzes the dehydration and aromatization of 5-amino-5-deoxy-3-dehydroshikimate (aminoDHS) to 3-amino-5-hydroxybenzoate (AHBA), a compound that then serves as the starter unit for the assembly of a polyketide during the biosynthesis of rifamycin B and other ansamycin antibiotics. Cannot utilize 5-deoxy-5-amino-3-dehydroquinate (aminoDHQ), 5-deoxy-5-aminoshikimate (aminoSA), quinate, 3-dehydroquinate, or 3-dehydroshikimate (DHS) as substrate. Its function is as follows. In a complex with RifL, RifK may have a second function in the AHBA pathway, acting as a transaminase introducing the nitrogen into the first pathway intermediate, UDP-3-keto-D-glucose, to give UDP-kanosamine. Appears to use glutamine as the nitrogen donor; NH(4)(+) or asparagine are 30% less effective as nitrogen donors and neither glutamate nor aspartate show activity. In Amycolatopsis mediterranei (strain S699) (Nocardia mediterranei), this protein is 3-amino-5-hydroxybenzoate synthase (rifK).